Here is a 254-residue protein sequence, read N- to C-terminus: GTP cyclohydrolase 1 type 2 homolog (254 aa).

The a divalent metal cation site is built by histidine 68, histidine 69, aspartate 106, histidine 222, and glutamate 226.

This sequence belongs to the GTP cyclohydrolase I type 2/NIF3 family. In terms of assembly, homohexamer.

The protein is GTP cyclohydrolase 1 type 2 homolog of Allochromatium vinosum (strain ATCC 17899 / DSM 180 / NBRC 103801 / NCIMB 10441 / D) (Chromatium vinosum).